Consider the following 164-residue polypeptide: Putative Cys-tRNA(Pro)/Cys-tRNA(Cys) deacylase EbsC (164 aa).

This sequence belongs to the prolyl-tRNA editing family. YbaK/EbsC subfamily.

Its function is as follows. Affects the expression of the receptor, named binding substance, that mediates mating aggregate formation. Could be a regulatory protein that suppresses the function or expression of ebsA and/or ebsMB. This chain is Putative Cys-tRNA(Pro)/Cys-tRNA(Cys) deacylase EbsC, found in Enterococcus faecalis (strain ATCC 700802 / V583).